The sequence spans 326 residues: MVSQTVSVAVTGGTGQIAYSFLFSLAHGDVFGLDCGIDLRIYDIPGTERALSGVRMELDDGAFPLLQRVQVTTSLHDAFDGIDAAFLIGSVPRGPGMERRDLLKKNGEIFATQGKALNTTAKRDAKIFVVGNPVNTNCWIAMNHAPRLLRKNFHAMLRLDQNRMHSMLSHRAEVPLSAVSQVVVWGNHSAKQVPDFTQALINDRPIAETIADRDWLENIMVPSVQSRGSAVIEARGKSSAASAARALAEAARSIYQPKEGEWFSSGVCSDHNPYGLPEDLIFGFPCRMLATGEYEVIPRLPWDAFIRGKMQISLDEILQEKASVSL.

12-18 (GGTGQIA) is a binding site for NAD(+). Arg-93 and Arg-99 together coordinate substrate. NAD(+)-binding positions include Asn-106, Gln-113, and 130–132 (VGN). Residues Asn-132 and Arg-163 each coordinate substrate. Residue His-188 is the Proton acceptor of the active site.

This sequence belongs to the LDH/MDH superfamily. MDH type 2 family.

The catalysed reaction is (S)-malate + NAD(+) = oxaloacetate + NADH + H(+). In terms of biological role, catalyzes the reversible oxidation of malate to oxaloacetate. The protein is Malate dehydrogenase of Chlamydia trachomatis serovar D (strain ATCC VR-885 / DSM 19411 / UW-3/Cx).